A 255-amino-acid chain; its full sequence is Small ribosomal subunit protein uS2 (255 aa).

The disordered stretch occupies residues Gln226–Glu255.

It belongs to the universal ribosomal protein uS2 family.

The sequence is that of Small ribosomal subunit protein uS2 from Staphylococcus aureus (strain JH1).